The sequence spans 122 residues: MARIAGVNLPTNKRVIIALTYIHGIGRKTAVDIADKLGIDHGRRVQDLSDAEVLQIRETIDADHTVEGDLRRNTAMNIKRLMDLACYRGLRHRKGLPVRGQRTHTNARTRKGKAKPIAGKKK.

The segment at 95-122 (GLPVRGQRTHTNARTRKGKAKPIAGKKK) is disordered.

This sequence belongs to the universal ribosomal protein uS13 family. In terms of assembly, part of the 30S ribosomal subunit. Forms a loose heterodimer with protein S19. Forms two bridges to the 50S subunit in the 70S ribosome.

Its function is as follows. Located at the top of the head of the 30S subunit, it contacts several helices of the 16S rRNA. In the 70S ribosome it contacts the 23S rRNA (bridge B1a) and protein L5 of the 50S subunit (bridge B1b), connecting the 2 subunits; these bridges are implicated in subunit movement. Contacts the tRNAs in the A and P-sites. The protein is Small ribosomal subunit protein uS13 of Sphingopyxis alaskensis (strain DSM 13593 / LMG 18877 / RB2256) (Sphingomonas alaskensis).